The following is a 541-amino-acid chain: Light-independent protochlorophyllide reductase subunit B (541 aa).

A [4Fe-4S] cluster-binding site is contributed by Asp36. Asp286 acts as the Proton donor in catalysis. 421–422 (GM) contributes to the substrate binding site.

It belongs to the ChlB/BchB/BchZ family. Protochlorophyllide reductase is composed of three subunits; BchL, BchN and BchB. Forms a heterotetramer of two BchB and two BchN subunits. The cofactor is [4Fe-4S] cluster.

The enzyme catalyses chlorophyllide a + oxidized 2[4Fe-4S]-[ferredoxin] + 2 ADP + 2 phosphate = protochlorophyllide a + reduced 2[4Fe-4S]-[ferredoxin] + 2 ATP + 2 H2O. The protein operates within porphyrin-containing compound metabolism; bacteriochlorophyll biosynthesis (light-independent). Component of the dark-operative protochlorophyllide reductase (DPOR) that uses Mg-ATP and reduced ferredoxin to reduce ring D of protochlorophyllide (Pchlide) to form chlorophyllide a (Chlide). This reaction is light-independent. The NB-protein (BchN-BchB) is the catalytic component of the complex. The protein is Light-independent protochlorophyllide reductase subunit B of Chloroflexus aurantiacus (strain ATCC 29364 / DSM 637 / Y-400-fl).